Reading from the N-terminus, the 232-residue chain is Large ribosomal subunit protein uL1 (232 aa).

Belongs to the universal ribosomal protein uL1 family. As to quaternary structure, part of the 50S ribosomal subunit.

Its function is as follows. Binds directly to 23S rRNA. The L1 stalk is quite mobile in the ribosome, and is involved in E site tRNA release. In terms of biological role, protein L1 is also a translational repressor protein, it controls the translation of the L11 operon by binding to its mRNA. In Coxiella burnetii (strain RSA 331 / Henzerling II), this protein is Large ribosomal subunit protein uL1.